The primary structure comprises 168 residues: Phosphopantetheine adenylyltransferase (168 aa).

Thr-10 contacts substrate. Residues 10-11 (TF) and His-18 contribute to the ATP site. Residues Lys-42, Leu-74, and Arg-88 each coordinate substrate. ATP contacts are provided by residues 89–91 (GLR), Glu-99, and 124–130 (NSFISST).

This sequence belongs to the bacterial CoaD family. Homohexamer. It depends on Mg(2+) as a cofactor.

It is found in the cytoplasm. The enzyme catalyses (R)-4'-phosphopantetheine + ATP + H(+) = 3'-dephospho-CoA + diphosphate. It functions in the pathway cofactor biosynthesis; coenzyme A biosynthesis; CoA from (R)-pantothenate: step 4/5. In terms of biological role, reversibly transfers an adenylyl group from ATP to 4'-phosphopantetheine, yielding dephospho-CoA (dPCoA) and pyrophosphate. The chain is Phosphopantetheine adenylyltransferase from Shewanella denitrificans (strain OS217 / ATCC BAA-1090 / DSM 15013).